A 230-amino-acid chain; its full sequence is uncharacterized protein (230 aa).

7 helical membrane passes run 34–54 (FFAG…MNFQ), 56–76 (VVQY…GLMF), 87–107 (MLFA…GMVI), 111–131 (GLGA…LMSV), 146–166 (MLFI…FLGS), 167–187 (PMFQ…YIAY), and 205–225 (VSLY…IGIF).

It belongs to the BI1 family.

Its subcellular location is the cell membrane. This is an uncharacterized protein from Helicobacter pylori (strain J99 / ATCC 700824) (Campylobacter pylori J99).